The chain runs to 586 residues: Scavenger receptor cysteine-rich domain-containing group B protein (586 aa).

The segment at 1 to 33 is disordered; the sequence is MGPSERPSIGWTPKEAEMQIGPQPDGWSRGWKP. The first 58 residues, 1-58, serve as a signal peptide directing secretion; that stretch reads MGPSERPSIGWTPKEAEMQIGPQPDGWSRGWKPGDRGAVPLPLSPALSFLLLFPLASA. 4 SRCR domains span residues 69-169, 200-300, 355-455, and 484-584; these read LRLV…VLCD, VRLV…VLCA, LRLV…ALCA, and LRLA…VLCQ. 12 disulfide bridges follow: Cys-94-Cys-158, Cys-107-Cys-168, Cys-138-Cys-148, Cys-225-Cys-289, Cys-238-Cys-299, Cys-269-Cys-279, Cys-380-Cys-444, Cys-393-Cys-454, Cys-424-Cys-434, Cys-509-Cys-573, Cys-522-Cys-583, and Cys-553-Cys-563.

It localises to the secreted. The polypeptide is Scavenger receptor cysteine-rich domain-containing group B protein (Mus musculus (Mouse)).